We begin with the raw amino-acid sequence, 126 residues long: Non-specific lipid-transfer protein 15 (126 aa).

The signal sequence occupies residues 1 to 22 (MSKSIFVVCITLLVVLSPTLNA). Cystine bridges form between C34–C80, C45–C57, C58–C100, and C78–C114.

This sequence belongs to the plant LTP family.

In terms of biological role, plant non-specific lipid-transfer proteins transfer phospholipids as well as galactolipids across membranes. May play a role in wax or cutin deposition in the cell walls of expanding epidermal cells and certain secretory tissues. This Arabidopsis thaliana (Mouse-ear cress) protein is Non-specific lipid-transfer protein 15 (LTP15).